Reading from the N-terminus, the 284-residue chain is D-tagatose-1,6-bisphosphate aldolase subunit GatY (284 aa).

Aspartate 82 (proton donor) is an active-site residue. Residues histidine 83 and histidine 180 each coordinate Zn(2+). Glycine 181 lines the dihydroxyacetone phosphate pocket. Residue histidine 208 coordinates Zn(2+). Dihydroxyacetone phosphate-binding positions include 209–211 (GAS) and 230–233 (NVAT).

Belongs to the class II fructose-bisphosphate aldolase family. TagBP aldolase GatY subfamily. Forms a complex with GatZ. The cofactor is Zn(2+).

The catalysed reaction is D-tagatofuranose 1,6-bisphosphate = D-glyceraldehyde 3-phosphate + dihydroxyacetone phosphate. It participates in carbohydrate metabolism; D-tagatose 6-phosphate degradation; D-glyceraldehyde 3-phosphate and glycerone phosphate from D-tagatose 6-phosphate: step 2/2. Its function is as follows. Catalytic subunit of the tagatose-1,6-bisphosphate aldolase GatYZ, which catalyzes the reversible aldol condensation of dihydroxyacetone phosphate (DHAP or glycerone-phosphate) with glyceraldehyde 3-phosphate (G3P) to produce tagatose 1,6-bisphosphate (TBP). Requires GatZ subunit for full activity and stability. Is involved in the catabolism of galactitol. The protein is D-tagatose-1,6-bisphosphate aldolase subunit GatY of Salmonella typhi.